Consider the following 1174-residue polypeptide: MSPITREERLERRIQDLYANDPQFAAAKPATAITAAIERPGLPLPQIIETVMTGYADRPALAQRSVEFVTDAGTGHTTLRLLPHFETISYGELWDRISALADVLSTEQTVKPGDRVCLLGFNSVDYATIDMTLARLGAVAVPLQTSAAITQLQPIVAETQPTMIAASVDALADATELALSGQTATRVLVFDHHRQVDAHRAAVESARERLAGSAVVETLAEAIARGDVPRGASAGSAPGTDVSDDSLALLIYTSGSTGAPKGAMYPRRNVATFWRKRTWFEGGYEPSITLNFMPMSHVMGRQILYGTLCNGGTAYFVAKSDLSTLFEDLALVRPTELTFVPRVWDMVFDEFQSEVDRRLVDGADRVALEAQVKAEIRNDVLGGRYTSALTGSAPISDEMKAWVEELLDMHLVEGYGSTEAGMILIDGAIRRPAVLDYKLVDVPDLGYFLTDRPHPRGELLVKTDSLFPGYYQRAEVTADVFDADGFYRTGDIMAEVGPEQFVYLDRRNNVLKLSQGEFVTVSKLEAVFGDSPLVRQIYIYGNSARAYLLAVIVPTQEALDAVPVEELKARLGDSLQEVAKAAGLQSYEIPRDFIIETTPWTLENGLLTGIRKLARPQLKKHYGELLEQIYTDLAHGQADELRSLRQSGADAPVLVTVCRAAAALLGGSASDVQPDAHFTDLGGDSLSALSFTNLLHEIFDIEVPVGVIVSPANDLQALADYVEAARKPGSSRPTFASVHGASNGQVTEVHAGDLSLDKFIDAATLAEAPRLPAANTQVRTVLLTGATGFLGRYLALEWLERMDLVDGKLICLVRAKSDTEARARLDKTFDSGDPELLAHYRALAGDHLEVLAGDKGEADLGLDRQTWQRLADTVDLIVDPAALVNHVLPYSQLFGPNALGTAELLRLALTSKIKPYSYTSTIGVADQIPPSAFTEDADIRVISATRAVDDSYANGYSNSKWAGEVLLREAHDLCGLPVAVFRCDMILADTTWAGQLNVPDMFTRMILSLAATGIAPGSFYELAADGARQRAHYDGLPVEFIAEAISTLGAQSQDGFHTYHVMNPYDDGIGLDEFVDWLNESGCPIQRIADYGDWLQRFETALRALPDRQRHSSLLPLLHNYRQPERPVRGSIAPTDRFRAAVQEAKIGPDKDIPHVGAPIIVKYVSDLRLLGLL.

AMP-binding positions include His297, Ser392, 413-414 (EG), Thr418, Asp491, 503-506 (YLDR), Lys512, and Lys612. The Carrier domain maps to 651–726 (APVLVTVCRA…ALADYVEAAR (76 aa)). Ser685 is modified (O-(pantetheine 4'-phosphoryl)serine). NADP(+) contacts are provided by residues 787 to 791 (TGFLG), Arg814, Arg824, 854 to 855 (DK), 880 to 882 (PAA), 919 to 920 (TS), Tyr956, and Lys960.

It belongs to the ATP-dependent AMP-binding enzyme family. Carboxylic acid reductase subfamily. Pantetheine 4'-phosphate serves as cofactor.

The catalysed reaction is a carboxylate + ATP + NADPH + H(+) = an aldehyde + AMP + diphosphate + NADP(+). Its function is as follows. Catalyzes the ATP- and NADPH-dependent reduction of carboxylic acids to the corresponding aldehydes. Catalyzes the reduction of a wide range of aliphatic fatty acids (C6-C18) into their corresponding aldehydes. Can also reduce benzoate to benzaldehyde. Has a preference for NADPH over NADH as the electron donor. This Mycobacterium marinum (strain ATCC BAA-535 / M) protein is Carboxylic acid reductase.